The chain runs to 957 residues: Glycine dehydrogenase (decarboxylating) (957 aa).

Lys-708 carries the N6-(pyridoxal phosphate)lysine modification.

It belongs to the GcvP family. As to quaternary structure, the glycine cleavage system is composed of four proteins: P, T, L and H. It depends on pyridoxal 5'-phosphate as a cofactor.

The catalysed reaction is N(6)-[(R)-lipoyl]-L-lysyl-[glycine-cleavage complex H protein] + glycine + H(+) = N(6)-[(R)-S(8)-aminomethyldihydrolipoyl]-L-lysyl-[glycine-cleavage complex H protein] + CO2. In terms of biological role, the glycine cleavage system catalyzes the degradation of glycine. The P protein binds the alpha-amino group of glycine through its pyridoxal phosphate cofactor; CO(2) is released and the remaining methylamine moiety is then transferred to the lipoamide cofactor of the H protein. This Salmonella arizonae (strain ATCC BAA-731 / CDC346-86 / RSK2980) protein is Glycine dehydrogenase (decarboxylating).